Reading from the N-terminus, the 157-residue chain is Class-10 pathogenesis-related protein 1 (157 aa).

The protein belongs to the BetVI family. In terms of tissue distribution, high levels in roots and not detectable in hypocotyls, cotyledons, stems, leaves and flower buds of untreated plants. After induction, high levels are present in the vascular bundles of leaves.

The protein localises to the cytoplasm. The polypeptide is Class-10 pathogenesis-related protein 1 (MSPR10-1) (Medicago sativa (Alfalfa)).